Consider the following 142-residue polypeptide: uncharacterized protein (142 aa).

The interval 70–94 is disordered; that stretch reads PKSVSNSKKKKEKAEKGLLRPTTKP. Residues 81–94 are compositionally biased toward basic and acidic residues; it reads EKAEKGLLRPTTKP.

This is an uncharacterized protein from Bacillus subtilis (strain 168).